Consider the following 131-residue polypeptide: MNPAYRKAMLESEIQKLLMEALQQLRDPRLKKDFVTFSRVELSKDKRYADVYVSFLGTPEERKETVEILNRAKGFFRTFISKNLRLYVAPEIRFYEDKGIEASVKVHQLLVQLGYDPLKDKEKKEEDKEEE.

The protein belongs to the RbfA family. In terms of assembly, monomer. Binds 30S ribosomal subunits, but not 50S ribosomal subunits or 70S ribosomes.

Its subcellular location is the cytoplasm. In terms of biological role, one of several proteins that assist in the late maturation steps of the functional core of the 30S ribosomal subunit. Associates with free 30S ribosomal subunits (but not with 30S subunits that are part of 70S ribosomes or polysomes). Required for efficient processing of 16S rRNA. May interact with the 5'-terminal helix region of 16S rRNA. The sequence is that of Ribosome-binding factor A from Thermotoga petrophila (strain ATCC BAA-488 / DSM 13995 / JCM 10881 / RKU-1).